A 418-amino-acid polypeptide reads, in one-letter code: Tyrosine--tRNA ligase (418 aa).

Residue Tyr-34 coordinates L-tyrosine. The short motif at 39–48 (PTGDSMHIGH) is the 'HIGH' region element. Tyr-166 and Gln-170 together coordinate L-tyrosine. Residues 228–232 (KFGKT) carry the 'KMSKS' region motif. Lys-231 is a binding site for ATP. Positions 350–418 (QNIVLWLVDA…KKRYFLAHVK (69 aa)) constitute an S4 RNA-binding domain.

It belongs to the class-I aminoacyl-tRNA synthetase family. TyrS type 1 subfamily. In terms of assembly, homodimer.

It localises to the cytoplasm. The enzyme catalyses tRNA(Tyr) + L-tyrosine + ATP = L-tyrosyl-tRNA(Tyr) + AMP + diphosphate + H(+). Functionally, catalyzes the attachment of tyrosine to tRNA(Tyr) in a two-step reaction: tyrosine is first activated by ATP to form Tyr-AMP and then transferred to the acceptor end of tRNA(Tyr). The protein is Tyrosine--tRNA ligase of Lactiplantibacillus plantarum (strain ATCC BAA-793 / NCIMB 8826 / WCFS1) (Lactobacillus plantarum).